Reading from the N-terminus, the 322-residue chain is uncharacterized protein (322 aa).

The tract at residues leucine 174–arginine 207 is disordered. Residues valine 184–proline 195 show a composition bias toward polar residues.

It localises to the mitochondrion. This is an uncharacterized protein from Marchantia polymorpha (Common liverwort).